We begin with the raw amino-acid sequence, 257 residues long: Paired box protein 1 homolog (257 aa).

Residues 26–37 (TTPSSTSTTPSS) are compositionally biased toward low complexity. Positions 26–58 (TTPSSTSTTPSSDNGIQQYSSISTSSGYAPANS) are disordered. Residues 38-52 (DNGIQQYSSISTSSG) show a composition bias toward polar residues. The paired DNA-binding region spans 61–187 (KTAEVNQLGG…SSISRILRNK (127 aa)). A PAI subdomain region spans residues 64 to 120 (EVNQLGGVFVNGRPLPFEMRCKIVELSRQGTRPCDISRQLKISHGCVSKILTRFSEN). The segment at 139-187 (KVVEYIRSLKRSDPGIFAWEIRDRLISADICDRANLPSVSSISRILRNK) is RED subdomain.

It is found in the nucleus. Its function is as follows. Transcription factor. May play a role in pharyngeal cell differentiation. May have a protective role in response to infection by the Gram-negative bacterium Vibrio cholerae. This is Paired box protein 1 homolog from Caenorhabditis elegans.